A 194-amino-acid chain; its full sequence is Putative manganese efflux pump MntP (194 aa).

The next 6 helical transmembrane spans lie at 3 to 23 (PFSI…AAIG), 37 to 57 (LRAG…GWLL), 69 to 89 (DHWI…VAGL), 110 to 132 (LGLA…SLAF), 147 to 167 (CTFS…NLIG), and 172 to 192 (MLGG…HLSG).

Belongs to the MntP (TC 9.B.29) family.

Its subcellular location is the cell inner membrane. Its function is as follows. Probably functions as a manganese efflux pump. This Xanthomonas axonopodis pv. citri (strain 306) protein is Putative manganese efflux pump MntP.